A 710-amino-acid polypeptide reads, in one-letter code: Polyribonucleotide nucleotidyltransferase (710 aa).

The Mg(2+) site is built by Asp489 and Asp495. The KH domain maps to 556–615 (PKIDTIKIDVDKIKVVIGKGGETIDKIIAETGVKIDIDDEGNVSIYSSDQAAINRTKEII). Positions 625-693 (GEVYHAKVVR…EKGRVDASMK (69 aa)) constitute an S1 motif domain. A disordered region spans residues 691 to 710 (SMKALIPRPPKPEKKEEKHD). Residues 700 to 710 (PKPEKKEEKHD) are compositionally biased toward basic and acidic residues.

It depends on Mg(2+) as a cofactor.

It localises to the cytoplasm. It carries out the reaction RNA(n+1) + phosphate = RNA(n) + a ribonucleoside 5'-diphosphate. Involved in mRNA degradation. Catalyzes the phosphorolysis of single-stranded polyribonucleotides processively in the 3'- to 5'-direction. This Streptococcus pyogenes serotype M6 (strain ATCC BAA-946 / MGAS10394) protein is Polyribonucleotide nucleotidyltransferase.